The sequence spans 371 residues: Leucine-rich repeat-containing protein 2 (371 aa).

LRR repeat units lie at residues 122 to 143 (HLRE…IQLF), 145 to 166 (AMRI…IGCL), 168 to 189 (NLKE…LGDC), 191 to 214 (NLER…SNLK), 215 to 235 (QVTF…CVLR), 238 to 260 (NLQW…DRLE), 261 to 283 (ELQS…LNLK), 284 to 305 (KLTL…LCDS), and 308 to 329 (PLKF…DGNE).

This chain is Leucine-rich repeat-containing protein 2 (LRRC2), found in Homo sapiens (Human).